The sequence spans 740 residues: NAD(P)H-quinone oxidoreductase subunit 5, chloroplastic (740 aa).

Helical transmembrane passes span 9–29, 40–60, 89–109, 125–145, 147–167, 185–205, 219–239, 258–278, 286–306, 327–347, 354–374, 396–416, 425–445, 543–563, 602–622, and 717–737; these read WIIP…LFLF, WAFQ…YLSI, IDPL…MVLI, FAYM…SNLI, IYIF…FWFT, GDFG…SFEF, NEVD…GAVA, TPIS…FLVA, VIPY…LLGA, LGYM…FHLI, ALLF…VGYS, ITFL…CFWS, WLYS…TAFY, LFPI…GIPF, VLSV…YKPI, and SYLF…YLLF.

This sequence belongs to the complex I subunit 5 family. NDH is composed of at least 16 different subunits, 5 of which are encoded in the nucleus.

The protein resides in the plastid. It localises to the chloroplast thylakoid membrane. It catalyses the reaction a plastoquinone + NADH + (n+1) H(+)(in) = a plastoquinol + NAD(+) + n H(+)(out). It carries out the reaction a plastoquinone + NADPH + (n+1) H(+)(in) = a plastoquinol + NADP(+) + n H(+)(out). In terms of biological role, NDH shuttles electrons from NAD(P)H:plastoquinone, via FMN and iron-sulfur (Fe-S) centers, to quinones in the photosynthetic chain and possibly in a chloroplast respiratory chain. The immediate electron acceptor for the enzyme in this species is believed to be plastoquinone. Couples the redox reaction to proton translocation, and thus conserves the redox energy in a proton gradient. The polypeptide is NAD(P)H-quinone oxidoreductase subunit 5, chloroplastic (ndhF) (Nicotiana sylvestris (Wood tobacco)).